An 80-amino-acid polypeptide reads, in one-letter code: Secreted transmembrane peptide 3 (80 aa).

An N-terminal signal peptide occupies residues 1–27; it reads MGLKMSSNALLLSLFLLLLCLFSEIGG. The tract at residues 44 to 80 is disordered; it reads IATPPSLTCGGQRLGGPQPRLSPCPRPRPRPRPRTGS. Positions 62-80 match the SCOOP motif motif; that stretch reads PRLSPCPRPRPRPRPRTGS. Residues 70–80 show a composition bias toward basic residues; that stretch reads PRPRPRPRTGS.

Belongs to the serine rich endogenous peptide (SCOOP) phytocytokine family. In terms of assembly, interacts with MIK2 (via extracellular leucine-rich repeat domain); this interaction triggers the formation of complex between MIK2 and the BAK1/SERK3 and SERK4 coreceptors, and subsequent BAK1 activation by phosphorylation. Mostly expressed in leaves, and, to a lower extent, in roots, stems, siliques, seeds and flowers.

The protein resides in the cell membrane. It localises to the secreted. Its subcellular location is the extracellular space. The protein localises to the apoplast. It is found in the endoplasmic reticulum. The protein resides in the golgi apparatus. Brassicaceae-specific phytocytokine (plant endogenous peptide released into the apoplast) perceived by MIK2 in a BAK1/SERK3 and SERK4 coreceptors-dependent manner, that modulates various physiological and antimicrobial processes including growth prevention and reactive oxygen species (ROS) response regulation. This chain is Secreted transmembrane peptide 3, found in Arabidopsis thaliana (Mouse-ear cress).